The following is a 230-amino-acid chain: Rab15 effector protein (230 aa).

The N-myristoyl glycine moiety is linked to residue Gly2.

Interacts with the GTP-bound form of RAB15, RAB3A-D and RAB34.

The protein localises to the early endosome membrane. Effector that interacts with Rab GTPases in their active form (GTP-bound) including RAB15, RAB3A-D and RAB34. Controls downstream signaling such as cell proliferation and cell migration. Also regulates transferrin receptor recycling from the endocytic recycling compartment. This Mus musculus (Mouse) protein is Rab15 effector protein.